The primary structure comprises 371 residues: DNA replication and repair protein RecF (371 aa).

30-37 (GPNAQGKT) is a binding site for ATP.

The protein belongs to the RecF family.

It localises to the cytoplasm. Functionally, the RecF protein is involved in DNA metabolism; it is required for DNA replication and normal SOS inducibility. RecF binds preferentially to single-stranded, linear DNA. It also seems to bind ATP. In Desulforamulus reducens (strain ATCC BAA-1160 / DSM 100696 / MI-1) (Desulfotomaculum reducens), this protein is DNA replication and repair protein RecF.